A 449-amino-acid chain; its full sequence is Acetolactate synthase small subunit 1, chloroplastic (449 aa).

Residues 1 to 30 constitute a chloroplast transit peptide; the sequence is MEHIQTRTTLSQLSTLPSDKRLGAIRFKCL. ACT domains are found at residues 31–98 and 259–333; these read LVMK…DLSK and TLSM…DITH.

It belongs to the acetolactate synthase small subunit family. As to quaternary structure, the acetolactate synthase complex contains both large catalytic subunits and small regulatory subunits.

The protein localises to the plastid. The protein resides in the chloroplast. It functions in the pathway amino-acid biosynthesis; L-isoleucine biosynthesis; L-isoleucine from 2-oxobutanoate: step 1/4. It participates in amino-acid biosynthesis; L-valine biosynthesis; L-valine from pyruvate: step 1/4. Regulatory subunit of acetohydroxy-acid synthase. Probably involved in feedback inhibition by branched-chain amino acids. Not involved in herbicide tolerance. The sequence is that of Acetolactate synthase small subunit 1, chloroplastic from Nicotiana plumbaginifolia (Leadwort-leaved tobacco).